A 75-amino-acid chain; its full sequence is Small ribosomal subunit protein bS18c (75 aa).

The protein belongs to the bacterial ribosomal protein bS18 family. In terms of assembly, part of the 30S ribosomal subunit.

It localises to the plastid. The protein resides in the chloroplast. This Adiantum capillus-veneris (Maidenhair fern) protein is Small ribosomal subunit protein bS18c.